We begin with the raw amino-acid sequence, 951 residues long: PE-PGRS family protein PE_PGRS3 (951 aa).

Positions 4-94 (VIAAPEVIAA…GAYAAAEAAA (91 aa)) constitute a PE domain. Positions 887-919 (CRRQRRADRQRRQRRQRRQSRGHARCRRHRRAA) are enriched in basic residues. Residues 887 to 951 (CRRQRRADRQ…GISCSPQMMP (65 aa)) form a disordered region.

This sequence belongs to the mycobacterial PE family. PGRS subfamily.

The protein resides in the cell outer membrane. The protein localises to the secreted. It is found in the cell wall. Its subcellular location is the cell surface. Its function is as follows. The arginine-rich C-terminal region protrudes from the mycobacterial membrane and mediates M.tuberculosis entry into host epithelial cells. May serve as a bridge between mycobacteria and host cells by interacting with specific host phospholipids and extracting them from host cells, for their direct integration or as a source of phosphate, during phases of TB pathogenesis when M.tuberculosis is short of phosphate supply. The sequence is that of PE-PGRS family protein PE_PGRS3 (PE_PGRS3) from Mycobacterium tuberculosis (strain CDC 1551 / Oshkosh).